We begin with the raw amino-acid sequence, 264 residues long: Type III pantothenate kinase (264 aa).

6 to 13 is an ATP binding site; sequence DSGNSRLK. Substrate contacts are provided by residues Tyr92 and 99 to 102; that span reads GADR. Asp101 serves as the catalytic Proton acceptor. Thr127 serves as a coordination point for ATP. A substrate-binding site is contributed by Thr177.

It belongs to the type III pantothenate kinase family. In terms of assembly, homodimer. NH4(+) serves as cofactor. The cofactor is K(+).

The protein localises to the cytoplasm. It carries out the reaction (R)-pantothenate + ATP = (R)-4'-phosphopantothenate + ADP + H(+). It participates in cofactor biosynthesis; coenzyme A biosynthesis; CoA from (R)-pantothenate: step 1/5. In terms of biological role, catalyzes the phosphorylation of pantothenate (Pan), the first step in CoA biosynthesis. The polypeptide is Type III pantothenate kinase (Bordetella petrii (strain ATCC BAA-461 / DSM 12804 / CCUG 43448)).